Consider the following 425-residue polypeptide: Sucrose-phosphatase 2 (425 aa).

Belongs to the sucrose phosphatase family. Homodimer. Mg(2+) serves as cofactor.

It carries out the reaction sucrose 6(F)-phosphate + H2O = sucrose + phosphate. It functions in the pathway glycan biosynthesis; sucrose biosynthesis; sucrose from D-fructose 6-phosphate and UDP-alpha-D-glucose: step 2/2. Its activity is regulated as follows. Inhibited by EDTA. In terms of biological role, catalyzes the final step of sucrose synthesis. This Nicotiana tabacum (Common tobacco) protein is Sucrose-phosphatase 2 (SPP2).